Here is a 198-residue protein sequence, read N- to C-terminus: Nascent polypeptide-associated complex subunit alpha (198 aa).

Positions 48–113 (ITRVVLKRTR…QAAAETGSVS (66 aa)) constitute an NAC-A/B domain. Residues 159 to 198 (LEDSDIKLVMEQANVSRNKAINGLKKNDSDVVNTIMDLCK) form the UBA domain.

It belongs to the NAC-alpha family. Part of the nascent polypeptide-associated complex (NAC), consisting of EGD2 and EGD1. NAC associates with ribosomes via EGD1.

The protein resides in the cytoplasm. Its subcellular location is the nucleus. Its function is as follows. Component of the nascent polypeptide-associated complex (NAC), a dynamic component of the ribosomal exit tunnel, protecting the emerging polypeptides from interaction with other cytoplasmic proteins to ensure appropriate nascent protein targeting. The NAC complex also promotes mitochondrial protein import by enhancing productive ribosome interactions with the outer mitochondrial membrane and blocks the inappropriate interaction of ribosomes translating non-secretory nascent polypeptides with translocation sites in the membrane of the endoplasmic reticulum. EGD2 may also be involved in transcription regulation. The protein is Nascent polypeptide-associated complex subunit alpha (EGD2) of Yarrowia lipolytica (strain CLIB 122 / E 150) (Yeast).